Consider the following 98-residue polypeptide: Large ribosomal subunit protein uL23 (98 aa).

It belongs to the universal ribosomal protein uL23 family. In terms of assembly, part of the 50S ribosomal subunit. Contacts protein L29, and trigger factor when it is bound to the ribosome.

Its function is as follows. One of the early assembly proteins it binds 23S rRNA. One of the proteins that surrounds the polypeptide exit tunnel on the outside of the ribosome. Forms the main docking site for trigger factor binding to the ribosome. The chain is Large ribosomal subunit protein uL23 from Parafrankia sp. (strain EAN1pec).